The primary structure comprises 129 residues: Biogenesis of lysosome-related organelles complex 1 subunit CNL1 (129 aa).

The protein belongs to the BLOC1S4 family. As to quaternary structure, component of the biogenesis of lysosome-related organelles complex-1 (BLOC-1).

It is found in the cytoplasm. Functionally, component of the biogenesis of lysosome-related organelles complex-1 (BLOC-1), a complex that is involved in endosomal cargo sorting. The protein is Biogenesis of lysosome-related organelles complex 1 subunit CNL1 (CLN1) of Eremothecium gossypii (strain ATCC 10895 / CBS 109.51 / FGSC 9923 / NRRL Y-1056) (Yeast).